A 205-amino-acid chain; its full sequence is ATP synthase subunit b (205 aa).

The helical transmembrane segment at 51-69 (FAWRCLDFAVLLAIVVWAL) threads the bilayer.

The protein belongs to the ATPase B chain family. In terms of assembly, F-type ATPases have 2 components, F(1) - the catalytic core - and F(0) - the membrane proton channel. F(1) has five subunits: alpha(3), beta(3), gamma(1), delta(1), epsilon(1). F(0) has three main subunits: a(1), b(2) and c(10-14). The alpha and beta chains form an alternating ring which encloses part of the gamma chain. F(1) is attached to F(0) by a central stalk formed by the gamma and epsilon chains, while a peripheral stalk is formed by the delta and b chains.

The protein resides in the cell inner membrane. Its function is as follows. F(1)F(0) ATP synthase produces ATP from ADP in the presence of a proton or sodium gradient. F-type ATPases consist of two structural domains, F(1) containing the extramembraneous catalytic core and F(0) containing the membrane proton channel, linked together by a central stalk and a peripheral stalk. During catalysis, ATP synthesis in the catalytic domain of F(1) is coupled via a rotary mechanism of the central stalk subunits to proton translocation. Functionally, component of the F(0) channel, it forms part of the peripheral stalk, linking F(1) to F(0). This chain is ATP synthase subunit b, found in Geotalea uraniireducens (strain Rf4) (Geobacter uraniireducens).